The primary structure comprises 322 residues: Probable arabinan endo-1,5-alpha-L-arabinosidase A (322 aa).

Residues 1-19 (MYLPTLAASASLLVGVAHG) form the signal peptide. D34 functions as the Proton acceptor in the catalytic mechanism. E201 acts as the Proton donor in catalysis.

It belongs to the glycosyl hydrolase 43 family.

The protein resides in the secreted. The enzyme catalyses Endohydrolysis of (1-&gt;5)-alpha-arabinofuranosidic linkages in (1-&gt;5)-arabinans.. It participates in glycan metabolism; L-arabinan degradation. Its function is as follows. Endo-1,5-alpha-L-arabinanase involved in degradation of pectin. Its preferred substrate is linear 1,5-alpha-L-arabinan. The chain is Probable arabinan endo-1,5-alpha-L-arabinosidase A (abnA) from Emericella nidulans (strain FGSC A4 / ATCC 38163 / CBS 112.46 / NRRL 194 / M139) (Aspergillus nidulans).